The following is a 551-amino-acid chain: Probable aldehyde dehydrogenase (551 aa).

278 to 283 (GSSRVA) is an NAD(+) binding site. Catalysis depends on Glu-297, which acts as the Proton acceptor. Cys-332 functions as the Nucleophile in the catalytic mechanism.

Belongs to the aldehyde dehydrogenase family. As to expression, in uninfected plants, highest levels found in stems. In plants infected with the flax rust, highest levels in leaves. Higher levels of expression in infected leaves than uninfected stems.

It catalyses the reaction an aldehyde + NAD(+) + H2O = a carboxylate + NADH + 2 H(+). In terms of biological role, could be involved in facilitating the biotrophic relationship between the plant and the rust fungus. The chain is Probable aldehyde dehydrogenase (FIS1) from Linum usitatissimum (Flax).